Reading from the N-terminus, the 230-residue chain is Sugar fermentation stimulation protein homolog (230 aa).

It belongs to the SfsA family.

This is Sugar fermentation stimulation protein homolog from Caldivirga maquilingensis (strain ATCC 700844 / DSM 13496 / JCM 10307 / IC-167).